We begin with the raw amino-acid sequence, 267 residues long: 3-methyl-2-oxobutanoate hydroxymethyltransferase (267 aa).

Residues Asp-45 and Asp-84 each coordinate Mg(2+). 3-methyl-2-oxobutanoate contacts are provided by residues 45–46, Asp-84, and Lys-113; that span reads DS. Residue Glu-115 coordinates Mg(2+). Glu-182 acts as the Proton acceptor in catalysis.

It belongs to the PanB family. Homodecamer; pentamer of dimers. The cofactor is Mg(2+).

Its subcellular location is the cytoplasm. It catalyses the reaction 3-methyl-2-oxobutanoate + (6R)-5,10-methylene-5,6,7,8-tetrahydrofolate + H2O = 2-dehydropantoate + (6S)-5,6,7,8-tetrahydrofolate. It participates in cofactor biosynthesis; coenzyme A biosynthesis. In terms of biological role, catalyzes the reversible reaction in which hydroxymethyl group from 5,10-methylenetetrahydrofolate is transferred onto alpha-ketoisovalerate to form ketopantoate. This Saccharolobus islandicus (strain Y.G.57.14 / Yellowstone #1) (Sulfolobus islandicus) protein is 3-methyl-2-oxobutanoate hydroxymethyltransferase.